Consider the following 424-residue polypeptide: Serine--tRNA ligase (424 aa).

231–233 (TAE) is a binding site for L-serine. ATP-binding positions include 262 to 264 (RRE) and Val278. An L-serine-binding site is contributed by Glu285. ATP is bound at residue 349–352 (EVSS). Ser384 contributes to the L-serine binding site.

The protein belongs to the class-II aminoacyl-tRNA synthetase family. Type-1 seryl-tRNA synthetase subfamily. In terms of assembly, homodimer. The tRNA molecule binds across the dimer.

It localises to the cytoplasm. It catalyses the reaction tRNA(Ser) + L-serine + ATP = L-seryl-tRNA(Ser) + AMP + diphosphate + H(+). It carries out the reaction tRNA(Sec) + L-serine + ATP = L-seryl-tRNA(Sec) + AMP + diphosphate + H(+). It functions in the pathway aminoacyl-tRNA biosynthesis; selenocysteinyl-tRNA(Sec) biosynthesis; L-seryl-tRNA(Sec) from L-serine and tRNA(Sec): step 1/1. Functionally, catalyzes the attachment of serine to tRNA(Ser). Is also able to aminoacylate tRNA(Sec) with serine, to form the misacylated tRNA L-seryl-tRNA(Sec), which will be further converted into selenocysteinyl-tRNA(Sec). This chain is Serine--tRNA ligase, found in Chlamydia abortus (strain DSM 27085 / S26/3) (Chlamydophila abortus).